The chain runs to 526 residues: Peptide chain release factor 3 (526 aa).

Residues 8 to 277 (NKRRTFAIIS…GLTEWAPKPQ (270 aa)) enclose the tr-type G domain. GTP-binding positions include 17 to 24 (SHPDAGKT), 85 to 89 (DTPGH), and 139 to 142 (NKLD).

Belongs to the TRAFAC class translation factor GTPase superfamily. Classic translation factor GTPase family. PrfC subfamily.

Its subcellular location is the cytoplasm. Functionally, increases the formation of ribosomal termination complexes and stimulates activities of RF-1 and RF-2. It binds guanine nucleotides and has strong preference for UGA stop codons. It may interact directly with the ribosome. The stimulation of RF-1 and RF-2 is significantly reduced by GTP and GDP, but not by GMP. The chain is Peptide chain release factor 3 from Haemophilus ducreyi (strain 35000HP / ATCC 700724).